Here is a 167-residue protein sequence, read N- to C-terminus: Crossover junction endodeoxyribonuclease RuvC (167 aa).

Active-site residues include aspartate 8, glutamate 67, and aspartate 139. Residues aspartate 8, glutamate 67, and aspartate 139 each contribute to the Mg(2+) site.

This sequence belongs to the RuvC family. Homodimer which binds Holliday junction (HJ) DNA. The HJ becomes 2-fold symmetrical on binding to RuvC with unstacked arms; it has a different conformation from HJ DNA in complex with RuvA. In the full resolvosome a probable DNA-RuvA(4)-RuvB(12)-RuvC(2) complex forms which resolves the HJ. Mg(2+) serves as cofactor.

The protein localises to the cytoplasm. The catalysed reaction is Endonucleolytic cleavage at a junction such as a reciprocal single-stranded crossover between two homologous DNA duplexes (Holliday junction).. Its function is as follows. The RuvA-RuvB-RuvC complex processes Holliday junction (HJ) DNA during genetic recombination and DNA repair. Endonuclease that resolves HJ intermediates. Cleaves cruciform DNA by making single-stranded nicks across the HJ at symmetrical positions within the homologous arms, yielding a 5'-phosphate and a 3'-hydroxyl group; requires a central core of homology in the junction. The consensus cleavage sequence is 5'-(A/T)TT(C/G)-3'. Cleavage occurs on the 3'-side of the TT dinucleotide at the point of strand exchange. HJ branch migration catalyzed by RuvA-RuvB allows RuvC to scan DNA until it finds its consensus sequence, where it cleaves and resolves the cruciform DNA. The chain is Crossover junction endodeoxyribonuclease RuvC from Halorhodospira halophila (strain DSM 244 / SL1) (Ectothiorhodospira halophila (strain DSM 244 / SL1)).